Reading from the N-terminus, the 74-residue chain is UPF0346 protein LCA_0996 (74 aa).

It belongs to the UPF0346 family.

This is UPF0346 protein LCA_0996 from Latilactobacillus sakei subsp. sakei (strain 23K) (Lactobacillus sakei subsp. sakei).